A 432-amino-acid polypeptide reads, in one-letter code: RING finger protein 44 (432 aa).

The segment at 1-86 is disordered; that stretch reads MRPWALAVTR…GGSPRMLHPA (86 aa). The segment covering 56 to 65 has biased composition (pro residues); sequence QQPPSRPPHL. Residues 380–421 form an RING-type; atypical zinc finger; sequence CVVCFSDFEARQLLRVLPCNHEFHTKCVDKWLKANRTCPICR.

The polypeptide is RING finger protein 44 (RNF44) (Homo sapiens (Human)).